Reading from the N-terminus, the 452-residue chain is MTKKIIAKKIIALVGRPNVGKSTLFNRLSMRKKAIVHDLPGVTRDRKYTDGRIGSFEFSLIDTPGLEENPDSFGKRLMEQTTKAINEADLICFMVDSRSGILPDDKLLSDFVRKYNKPAVLVINKCEKAFDFDKEYYKLGFDSMVAISAEHGTGMIDLYDEIIAKLPEEDSAEAEIHDPIKGDCLQIVVSGRPNAGKSTFINALINDERLLTGPEAGITRESIEIDWQYKGNHIKLIDTAGLRKKATITESLEKLSASDAINSIKFANTVILMIDALSPLKQQDLNIASHVANEGRSIVIVVNKWDLIKESEKEAFKEEFYYQINTTLPQVKGVPALFISAKNKQNIADVLDSCIKIYKTWNKKITTSKLNEWLNFTTEAHPLPLQKGGKRVRVKYMTQTKTRPPTFKLFSNNPEKITDSYTRYLVNNMREAFDMPGVPIRFNYIKTKNPYV.

2 EngA-type G domains span residues 9 to 170 (KIIA…PEED) and 185 to 362 (LQIV…KTWN). Residues 15–22 (GRPNVGKS), 62–66 (DTPGL), 124–127 (NKCE), 191–198 (GRPNAGKS), 238–242 (DTAGL), and 303–306 (NKWD) contribute to the GTP site. The region spanning 363 to 448 (KKITTSKLNE…PIRFNYIKTK (86 aa)) is the KH-like domain.

The protein belongs to the TRAFAC class TrmE-Era-EngA-EngB-Septin-like GTPase superfamily. EngA (Der) GTPase family. In terms of assembly, associates with the 50S ribosomal subunit.

GTPase that plays an essential role in the late steps of ribosome biogenesis. The protein is GTPase Der of Rickettsia bellii (strain RML369-C).